Reading from the N-terminus, the 285-residue chain is Probable endonuclease 4 (285 aa).

H69, H109, E145, D179, H182, H216, D229, H231, and E261 together coordinate Zn(2+).

It belongs to the AP endonuclease 2 family. Requires Zn(2+) as cofactor.

It catalyses the reaction Endonucleolytic cleavage to 5'-phosphooligonucleotide end-products.. Endonuclease IV plays a role in DNA repair. It cleaves phosphodiester bonds at apurinic or apyrimidinic (AP) sites, generating a 3'-hydroxyl group and a 5'-terminal sugar phosphate. The protein is Probable endonuclease 4 of Salmonella heidelberg (strain SL476).